A 778-amino-acid polypeptide reads, in one-letter code: Hyaluronate lyase (778 aa).

Residues 1–33 (MSWNRRSFLGALGVTCLAGAGMVPIVRPRTAAA) constitute a signal peptide (tat-type signal). Active-site residues include Asn-200, His-250, and Tyr-259.

It belongs to the polysaccharide lyase 8 family. Predicted to be exported by the Tat system. The position of the signal peptide cleavage has not been experimentally proven.

The catalysed reaction is [hyaluronan](n) = n 3-(4-deoxy-beta-D-gluc-4-enuronosyl)-N-acetyl-D-glucosamine + H2O. Is salt-dependent and is active over a wide range of NaCl concentrations. Activity is slightly promoted by Ni(2+), and inhibited by most of the tested metal ions, including Li(+), K(+), Ba(2+), Mg(2+), Zn(2+), Ca(2+), Mn(2+) and Al(3+). Its function is as follows. Degrades hyaluronic acid into unsaturated disaccharides as the end products. Exhibits very low activity against various types of chondroitin sulfate variants. The chain is Hyaluronate lyase from Thermasporomyces composti.